The sequence spans 175 residues: Translation initiation factor IF-3 (175 aa).

The protein belongs to the IF-3 family. In terms of assembly, monomer.

It is found in the cytoplasm. IF-3 binds to the 30S ribosomal subunit and shifts the equilibrium between 70S ribosomes and their 50S and 30S subunits in favor of the free subunits, thus enhancing the availability of 30S subunits on which protein synthesis initiation begins. This is Translation initiation factor IF-3 from Staphylococcus carnosus (strain TM300).